The sequence spans 553 residues: Solute carrier family 2, facilitated glucose transporter member 10 (553 aa).

At 1 to 15 the chain is on the cytoplasmic side; that stretch reads MGLRSTTLVLAATSS. Residues 16–36 traverse the membrane as a helical segment; it reads LLGGLIFGYELGIISGALLML. Residues 37 to 48 are Extracellular-facing; it reads KTVFQLTCFEQE. Residues 49-69 form a helical membrane-spanning segment; the sequence is ALVSAVLFGALLASLIGGFII. The Cytoplasmic portion of the chain corresponds to 70 to 82; the sequence is DRSGRRTSIMGSN. A helical transmembrane segment spans residues 83-103; sequence LVVLAGSIILIATSSFWWLVV. Topologically, residues 104–105 are extracellular; sequence GR. A helical membrane pass occupies residues 106 to 126; it reads VTVGFAISISSMACCIYVSEI. Residues 127–132 are Cytoplasmic-facing; the sequence is VRPHQR. A helical membrane pass occupies residues 133-153; sequence GTLVSLYETGITVGILISYAM. Over 154-165 the chain is Extracellular; sequence NYFLSAVNDGWK. The chain crosses the membrane as a helical span at residues 166–186; it reads YMFGLAIIPAAFQFIVILFLP. Topologically, residues 187–240 are cytoplasmic; it reads SKPHTLNFWEQDSDNGFIELEEAGESGEFKPDTYDKQYTFLDLFRSKDNMRTRT. Residues 241–261 traverse the membrane as a helical segment; sequence LLGLGLVLFQQFTGQPNVLYY. 250 to 251 serves as a coordination point for D-glucose; sequence QQ. Residues 262-277 are Extracellular-facing; that stretch reads ASTIFRSVGFQSNSSA. Asn-274 carries an N-linked (GlcNAc...) asparagine glycan. A helical transmembrane segment spans residues 278 to 298; sequence VLASVGLGVVKVASTLIAICF. Over 299–305 the chain is Cytoplasmic; the sequence is ADKAGRR. Residues 306–326 traverse the membrane as a helical segment; it reads ILLLAGCIVMTIAISGIGIVS. At 327–413 the chain is on the extracellular side; that stretch reads FMVELDSHRD…PPAGPDSNYA (87 aa). N-linked (GlcNAc...) asparagine glycosylation is found at Asn-344, Asn-351, and Asn-400. A helical transmembrane segment spans residues 414-434; the sequence is ILNWITLLSMMAFVSAFSIGF. Over 435–462 the chain is Cytoplasmic; the sequence is GPMTWLVLSEIYPADIRGRAFAFCNSFN. Trp-439 serves as a coordination point for D-glucose. Residues 463–482 traverse the membrane as a helical segment; it reads WAANLLITLTFLEVIGSIGL. Gly-483 is a topological domain (extracellular). The helical transmembrane segment at 484 to 504 threads the bilayer; sequence WTFLLYGGVGLLAIAFIYFFI. Over 505–553 the chain is Cytoplasmic; that stretch reads PETKGQSLEEIDQQLSSKRISKRRETSKGVRKRPSTGPPYQRVGKSNWT. Residues 522-553 form a disordered region; sequence KRISKRRETSKGVRKRPSTGPPYQRVGKSNWT.

The protein belongs to the major facilitator superfamily. Sugar transporter (TC 2.A.1.1) family. Glucose transporter subfamily.

The protein localises to the endomembrane system. The protein resides in the cytoplasm. Its subcellular location is the perinuclear region. The catalysed reaction is D-glucose(out) = D-glucose(in). Its function is as follows. Facilitative glucose transporter required for the development of the cardiovascular system. In Xenopus laevis (African clawed frog), this protein is Solute carrier family 2, facilitated glucose transporter member 10.